The following is a 127-amino-acid chain: DNA-directed RNA polymerases I, II, and III subunit RPABC2 (127 aa).

The segment covering 1–34 (MSDNEDNFDGDDFDDVEEDEGLDDLENAEEEGQE) has biased composition (acidic residues). The segment at 1 to 53 (MSDNEDNFDGDDFDDVEEDEGLDDLENAEEEGQENVEILPSGERPQANQKRIT) is disordered. Ser2 is modified (N-acetylserine). Ser2 is subject to Phosphoserine; by CK2.

The protein belongs to the archaeal Rpo6/eukaryotic RPB6 RNA polymerase subunit family. In terms of assembly, component of the RNA polymerase I (Pol I), RNA polymerase II (Pol II) and RNA polymerase III (Pol III) complexes consisting of at least 13, 12 and 17 subunits, respectively. Pol I complex consists of a ten-subunit catalytic core composed of POLR1A/RPA1, POLR1B/RPA2, POLR1C/RPAC1, POLR1D/RPAC2, POLR1H/RPA12, POLR2E/RPABC1, POLR2F/RPABC2, POLR2H/RPABC3, POLR2K/RPABC4 and POLR2L/RPABC5; a mobile stalk subunit POLR1F/RPA43 protruding from the core and additional subunits homologous to general transcription factors POLR1E/RPA49 and POLR1G/RPA34. Part of Pol I pre-initiation complex (PIC), in which Pol I core assembles with RRN3 and promoter-bound UTBF and SL1/TIF-IB complex. Pol II complex contains a ten-subunit catalytic core composed of POLR2A/RPB1, POLR2B/RPB2, POLR2C/RPB3, POLR2I/RPB9, POLR2J/RPB11, POLR2E/RPABC1, POLR2F/RPABC2, POLR2H/RPABC3, POLR2K/RPABC4 and POLR2L/RPABC5 and a mobile stalk composed of two subunits POLR2D/RPB4 and POLR2G/RPB7. Part of Pol II(G) complex, in which Pol II core associates with an additional subunit POLR2M; unlike conventional Pol II, Pol II(G) functions as a transcriptional repressor. Part of TBP-based Pol II pre-initiation complex (PIC), in which Pol II core assembles with general transcription factors and other specific initiation factors including GTF2E1, GTF2E2, GTF2F1, GTF2F2, TCEA1, ERCC2, ERCC3, GTF2H2, GTF2H3, GTF2H4, GTF2H5, GTF2A1, GTF2A2, GTF2B and TBP; this large multi-subunit PIC complex mediates DNA unwinding and targets Pol II core to the transcription start site where the first phosphodiester bond forms. Pol III complex consists of a ten-subunit catalytic core composed of POLR3A/RPC1, POLR3B/RPC2, POLR1C/RPAC1, POLR1D/RPAC2, POLR3K/RPC10, POLR2E/RPABC1, POLR2F/RPABC2, POLR2H/RPABC3, POLR2K/RPABC4 and POLR2L/RPABC5; a mobile stalk composed of two subunits POLR3H/RPC8 and CRCP/RPC9, protruding from the core and functioning primarily in transcription initiation; and additional subunits homologous to general transcription factors of the RNA polymerase II machinery, POLR3C/RPC3-POLR3F/RPC6-POLR3G/RPC7 heterotrimer required for transcription initiation and POLR3D/RPC4-POLR3E/RPC5 heterodimer involved in both transcription initiation and termination.

It is found in the nucleus. The protein resides in the nucleolus. DNA-dependent RNA polymerase catalyzes the transcription of DNA into RNA using the four ribonucleoside triphosphates as substrates. Common component of RNA polymerases I, II, and III which synthesize ribosomal RNA precursors, mRNA precursors and many functional non-coding RNAs, and small RNAs, such as 5S rRNA and tRNAs, respectively. Pol II is the central component of the basal RNA polymerase II transcription machinery. Pols are composed of mobile elements that move relative to each other. In Pol II, POLR2F/RPABC2 is part of the clamp element and together with parts of POLR2A/RPB1 and POLR2B/RPB2 forms a pocket to which the POLR2D/RPB4-POLR2G/RPB7 subcomplex binds. The protein is DNA-directed RNA polymerases I, II, and III subunit RPABC2 of Homo sapiens (Human).